Consider the following 372-residue polypeptide: uncharacterized protein (372 aa).

This is an uncharacterized protein from Mycobacterium tuberculosis (strain CDC 1551 / Oshkosh).